Reading from the N-terminus, the 331-residue chain is MPDTMVTTDVIKSAVQLACRAPSLHNSQPWRWIAEDHTVALFLDKDRVLYATDHSGREALLGCGAVLDHFRVAMAAAGTTANVERFPNPNDPLHLASIDFSPADFVTEGHRLRADAILLRRTDRLPFAEPPDWDLVESQLRTTVTADTVRIDVIADDMRPELAAASKLTESLRLYDSSYHAELFWWTGAFETSEGIPHSSLVSAAESDRVTFGRDFPVVANTDRRPEFGHDRSKVLVLSTYDNERASLLRCGEMLSAVLLDATMAGLATCTLTHITELHASRDLVAALIGQPATPQALVRVGLAPEMEEPPPATPRRPIDEVFHVRAKDHR.

FMN-binding positions include glutamine 28–tryptophan 32 and arginine 316.

This sequence belongs to the nitroreductase family. Requires FMN as cofactor.

This is Putative NAD(P)H nitroreductase acg (acg) from Mycobacterium tuberculosis (strain CDC 1551 / Oshkosh).